Here is a 310-residue protein sequence, read N- to C-terminus: Acetyl-coenzyme A carboxylase carboxyl transferase subunit beta, chloroplastic (310 aa).

The CoA carboxyltransferase N-terminal domain maps to L47–N310. Residues C51, C54, C70, and C73 each coordinate Zn(2+). The C4-type zinc finger occupies C51–C73.

Belongs to the AccD/PCCB family. Acetyl-CoA carboxylase is a heterohexamer composed of biotin carboxyl carrier protein, biotin carboxylase and 2 subunits each of ACCase subunit alpha and ACCase plastid-coded subunit beta (accD). Zn(2+) is required as a cofactor.

The protein localises to the plastid. It localises to the chloroplast stroma. The enzyme catalyses N(6)-carboxybiotinyl-L-lysyl-[protein] + acetyl-CoA = N(6)-biotinyl-L-lysyl-[protein] + malonyl-CoA. It participates in lipid metabolism; malonyl-CoA biosynthesis; malonyl-CoA from acetyl-CoA: step 1/1. Component of the acetyl coenzyme A carboxylase (ACC) complex. Biotin carboxylase (BC) catalyzes the carboxylation of biotin on its carrier protein (BCCP) and then the CO(2) group is transferred by the transcarboxylase to acetyl-CoA to form malonyl-CoA. In Adiantum capillus-veneris (Maidenhair fern), this protein is Acetyl-coenzyme A carboxylase carboxyl transferase subunit beta, chloroplastic.